Reading from the N-terminus, the 259-residue chain is Insulin-like growth factor-binding protein 4 (259 aa).

Residues 1-22 (MLPLCLVAALLLSASGPRPSLG) form the signal peptide. The IGFBP N-terminal domain occupies 24–104 (EAIHCPPCSE…MHGQGLCMEL (81 aa)). 6 disulfide bridges follow: cysteine 28–cysteine 54, cysteine 31–cysteine 56, cysteine 39–cysteine 57, cysteine 45–cysteine 60, cysteine 68–cysteine 81, and cysteine 75–cysteine 101. The segment at 115–136 (QPSDKDEGDHPNNSFSPCSPQD) is disordered. Asparagine 126 carries N-linked (GlcNAc...) asparagine glycosylation. Disulfide bonds link cysteine 132/cysteine 139, cysteine 175/cysteine 205, cysteine 216/cysteine 227, and cysteine 229/cysteine 250. A Thyroglobulin type-1 domain is found at 172–250 (QGSCQSELHR…GLEPKGELDC (79 aa)). A Phosphoserine modification is found at serine 256.

As to quaternary structure, binds IGF2 more than IGF1.

It is found in the secreted. In terms of biological role, IGF-binding proteins prolong the half-life of the IGFs and have been shown to either inhibit or stimulate the growth promoting effects of the IGFs on cell culture. They alter the interaction of IGFs with their cell surface receptors. The protein is Insulin-like growth factor-binding protein 4 (IGFBP4) of Sus scrofa (Pig).